We begin with the raw amino-acid sequence, 248 residues long: Adenosylcobinamide-GDP ribazoletransferase (248 aa).

The next 7 helical transmembrane spans lie at 24-44, 70-90, 106-126, 134-154, 168-188, 189-209, and 228-248; these read EINLKKGSALLPFVGVIIGAW, VIITGGFHVDALADTADGLFS, VGANGVIAICFYFLFYGALFL, ICWLFFVLPIVAKGVTMLLFA, IFLGVPWWPIVIAQVIVLAVL, GLFFSYVGVIAYVGVILFTII, and AGGQMGQLICLFCLVLLWGLV.

This sequence belongs to the CobS family. Mg(2+) is required as a cofactor.

The protein localises to the cell membrane. The enzyme catalyses alpha-ribazole + adenosylcob(III)inamide-GDP = adenosylcob(III)alamin + GMP + H(+). It carries out the reaction alpha-ribazole 5'-phosphate + adenosylcob(III)inamide-GDP = adenosylcob(III)alamin 5'-phosphate + GMP + H(+). It functions in the pathway cofactor biosynthesis; adenosylcobalamin biosynthesis; adenosylcobalamin from cob(II)yrinate a,c-diamide: step 7/7. Functionally, joins adenosylcobinamide-GDP and alpha-ribazole to generate adenosylcobalamin (Ado-cobalamin). Also synthesizes adenosylcobalamin 5'-phosphate from adenosylcobinamide-GDP and alpha-ribazole 5'-phosphate. The polypeptide is Adenosylcobinamide-GDP ribazoletransferase (Listeria monocytogenes serovar 1/2a (strain ATCC BAA-679 / EGD-e)).